The sequence spans 33 residues: MSDIN-like toxin proprotein 1 (33 aa).

Positions 1-10 are excised as a propeptide; the sequence is MSDINATRLP. A cross-link (cyclopeptide (Ile-Pro)) is located at residues 11–18; the sequence is IIWAPVVP. Positions 19 to 33 are excised as a propeptide; sequence CISDDNDSTLTRGQR.

This sequence belongs to the MSDIN fungal toxin family. In terms of processing, processed by the macrocyclase-peptidase enzyme POPB to yield a toxic cyclic octapeptide. POPB first removes 10 residues from the N-terminus. Conformational trapping of the remaining peptide forces the enzyme to release this intermediate rather than proceed to macrocyclization. The enzyme rebinds the remaining peptide in a different conformation and catalyzes macrocyclization of the N-terminal 8 residues.

Functionally, probable toxin that belongs to the MSDIN-like toxin family responsible for a large number of food poisoning cases and deaths. The protein is MSDIN-like toxin proprotein 1 of Amanita fuliginea (East Asian brown death cap).